The sequence spans 186 residues: Astacin-like metalloprotease toxin 5 (186 aa).

The Peptidase M12A domain occupies 1–186 (NAVKYDQQLW…CHSKRKAELL (186 aa)). Cystine bridges form between C42-C177 and C63-C84. Position 92 (H92) interacts with Zn(2+). Residue E93 is part of the active site. Zn(2+) is bound by residues H96 and H102. The N-linked (GlcNAc...) asparagine glycan is linked to N122.

Monomer. The cofactor is Zn(2+). Expressed by the venom gland.

It localises to the secreted. Inhibited by 1,10-phenanthroline. In terms of biological role, zinc metalloprotease. Provoques deadhesion of endothelial cells from cell cultures, and also degradation of fibronectin, fibrinogen and gelatin in vitro. Its role in the venom is not fully understood but it might act as a spreading factor that facilitates diffusion of other venom toxins. Alternatively, it might be involved in the proteolytic processing of other venom toxins or it might play a role in extra-oral digestion of prey. In Loxosceles gaucho (Spider), this protein is Astacin-like metalloprotease toxin 5.